A 384-amino-acid chain; its full sequence is Transcription factor TGA3 (384 aa).

Disordered stretches follow at residues 36-70 (KSDI…NNRV) and 76-95 (YNNS…EDRI). Over residues 39-55 (INNITSNQNNNQSSSTT) the composition is skewed to low complexity. Residues 58–68 (VDARPEADDNN) are compositionally biased toward basic and acidic residues. Over residues 76–88 (YNNSLEAEPSSNN) the composition is skewed to polar residues. Residues 96–138 (NDKMKRRLAQNREAARKSRLRKKAHVQQLEESRLKLSQLEQEL) enclose the bZIP domain. The interval 98–118 (KMKRRLAQNREAARKSRLRKK) is basic motif. Residues 99-106 (MKRRLAQN) carry the Nuclear localization signal motif. Positions 117-144 (KKAHVQQLEESRLKLSQLEQELVRARQQ) form a coiled coil. Residues 124 to 138 (LEESRLKLSQLEQEL) are leucine-zipper. Residues 167 to 379 (IAAFEMEYTH…RALSSLWAAR (213 aa)) form the DOG1 domain. K219, R236, and F249 together coordinate hexadecanoate. A coiled-coil region spans residues 267–296 (DQQLLEVRNLQQSSQQAEEALSQGLDKLQQ).

This sequence belongs to the bZIP family. In terms of assembly, binds DNA as a dimer. Interacts with NPR3, NPR4 and sumoylated NPR1. Interacts with GRXC7/ROXY1. Expressed in the whole plant.

It is found in the nucleus. Functionally, transcriptional activator that binds specifically to the DNA sequence 5'-TGACG-3'. Recognizes ocs elements like the as-1 motif of the cauliflower mosaic virus 35S promoter. Binding to the as-1-like cis elements mediate auxin- and salicylic acid-inducible transcription. Required to induce the systemic acquired resistance (SAR) via the regulation of pathogenesis-related genes expression. Binding to the as-1 element of PR-1 promoter is salicylic acid-inducible and mediated by sumoylated NPR1. Could also bind to the Hex-motif (5'-TGACGTGG-3') another cis-acting element found in plant histone promoters. This chain is Transcription factor TGA3, found in Arabidopsis thaliana (Mouse-ear cress).